Consider the following 170-residue polypeptide: Alpha-crystallin A chain (170 aa).

An N-acetylmethionine modification is found at methionine 1. A required for complex formation with BFSP1 and BFSP2 region spans residues 1–63 (MDVTIQHPWF…RTVLDSGISE (63 aa)). Glutamine 6 carries the post-translational modification Deamidated glutamine; partial. Serine 45 is modified (phosphoserine). At glutamine 50 the chain carries Deamidated glutamine; partial. Positions 52–161 (LFRTVLDSGI…SERTIPVSRE (110 aa)) constitute a sHSP domain. Residues lysine 70 and lysine 99 each carry the N6-acetyllysine modification. A Zn(2+)-binding site is contributed by histidine 100. Asparagine 101 bears the Deamidated asparagine; partial mark. Zn(2+)-binding residues include glutamate 102, histidine 107, and histidine 151. Residues 144 to 170 (PKIVDPSHSERTIPVSREEKPSSAPSS) form a disordered region. Over residues 148–164 (DPSHSERTIPVSREEKP) the composition is skewed to basic and acidic residues. An O-linked (GlcNAc) serine glycan is attached at serine 159.

It belongs to the small heat shock protein (HSP20) family. In terms of assembly, heteromer composed of three CRYAA and one CRYAB subunits. Inter-subunit bridging via zinc ions enhances stability, which is crucial as there is no protein turn over in the lens. Can also form homodimers and homotetramers (dimers of dimers) which serve as the building blocks of homooligomers. Within homooligomers, the zinc-binding motif is created from residues of 3 different molecules. His-100 and Glu-102 from one molecule are ligands of the zinc ion, and His-107 and His-151 residues from additional molecules complete the site with tetrahedral coordination geometry. Part of a complex required for lens intermediate filament formation composed of BFSP1, BFSP2 and CRYAA. Acetylation at Lys-70 may increase chaperone activity. Post-translationally, undergoes age-dependent proteolytical cleavage at the C-terminus.

The protein localises to the cytoplasm. The protein resides in the nucleus. Contributes to the transparency and refractive index of the lens. Acts as a chaperone, preventing aggregation of various proteins under a wide range of stress conditions. Required for the correct formation of lens intermediate filaments as part of a complex composed of BFSP1, BFSP2 and CRYAA. This chain is Alpha-crystallin A chain (CRYAA), found in Choloepus hoffmanni (Hoffmann's two-fingered sloth).